Reading from the N-terminus, the 353-residue chain is Ferrochelatase (353 aa).

Residues H223 and E304 each coordinate Fe cation.

Belongs to the ferrochelatase family.

It is found in the cytoplasm. The catalysed reaction is heme b + 2 H(+) = protoporphyrin IX + Fe(2+). It participates in porphyrin-containing compound metabolism; protoheme biosynthesis; protoheme from protoporphyrin-IX: step 1/1. Its function is as follows. Catalyzes the ferrous insertion into protoporphyrin IX. The protein is Ferrochelatase of Mesorhizobium japonicum (strain LMG 29417 / CECT 9101 / MAFF 303099) (Mesorhizobium loti (strain MAFF 303099)).